The sequence spans 184 residues: ATP synthase subunit delta (184 aa).

It belongs to the ATPase delta chain family. As to quaternary structure, F-type ATPases have 2 components, F(1) - the catalytic core - and F(0) - the membrane proton channel. F(1) has five subunits: alpha(3), beta(3), gamma(1), delta(1), epsilon(1). F(0) has three main subunits: a(1), b(2) and c(10-14). The alpha and beta chains form an alternating ring which encloses part of the gamma chain. F(1) is attached to F(0) by a central stalk formed by the gamma and epsilon chains, while a peripheral stalk is formed by the delta and b chains.

The protein resides in the cell inner membrane. F(1)F(0) ATP synthase produces ATP from ADP in the presence of a proton or sodium gradient. F-type ATPases consist of two structural domains, F(1) containing the extramembraneous catalytic core and F(0) containing the membrane proton channel, linked together by a central stalk and a peripheral stalk. During catalysis, ATP synthesis in the catalytic domain of F(1) is coupled via a rotary mechanism of the central stalk subunits to proton translocation. Its function is as follows. This protein is part of the stalk that links CF(0) to CF(1). It either transmits conformational changes from CF(0) to CF(1) or is implicated in proton conduction. The polypeptide is ATP synthase subunit delta (Caulobacter vibrioides (strain NA1000 / CB15N) (Caulobacter crescentus)).